A 616-amino-acid chain; its full sequence is E3 ubiquitin-protein ligase DTX4 (616 aa).

WWE domains are found at residues 1–78 (MLLA…PVRR) and 79–155 (NYYD…RVRR). Disordered stretches follow at residues 223–254 (VGKLPQPPGPGAKPLDTTGTIRGPGKTAPSQV) and 355–387 (PPPVSKSEIKSIPGVSNTSRKTTKKQAKKGKTP). Residues 375–384 (KTTKKQAKKG) are compositionally biased toward basic residues. The RING-type; atypical zinc-finger motif lies at 406–465 (CTICMERLTAPSGYKGPQPTVKPDLVGKLSRCGHIYHIYCLVAMYNNGNKDGSLQCPTCK).

This sequence belongs to the Deltex family. In terms of assembly, interacts with NLRP4. As to expression, expressed in brain, testis, embryonic fibroblasts and thymocytes.

The protein localises to the cytoplasm. The enzyme catalyses S-ubiquitinyl-[E2 ubiquitin-conjugating enzyme]-L-cysteine + [acceptor protein]-L-lysine = [E2 ubiquitin-conjugating enzyme]-L-cysteine + N(6)-ubiquitinyl-[acceptor protein]-L-lysine.. The protein operates within protein modification; protein ubiquitination. Functionally, functions as a ubiquitin ligase protein in vivo, mediating 'Lys48'-linked polyubiquitination and promoting degradation of TBK1, targeting to TBK1 requires interaction with NLRP4. Regulator of Notch signaling, a signaling pathway involved in cell-cell communications that regulates a broad spectrum of cell-fate determinations. The polypeptide is E3 ubiquitin-protein ligase DTX4 (Dtx4) (Mus musculus (Mouse)).